The following is a 389-amino-acid chain: Succinate--CoA ligase [ADP-forming] subunit beta (389 aa).

The region spanning 9-244 is the ATP-grasp domain; sequence KQLLAEYGIP…KTQEDETEVT (236 aa). Residues Lys46, 53–55, Gly102, and Glu107 each bind ATP; that span reads GRG. Mg(2+)-binding residues include Asn199 and Asp213. Residues Asn264 and 321–323 each bind substrate; that span reads GIV.

This sequence belongs to the succinate/malate CoA ligase beta subunit family. In terms of assembly, heterotetramer of two alpha and two beta subunits. Requires Mg(2+) as cofactor.

It catalyses the reaction succinate + ATP + CoA = succinyl-CoA + ADP + phosphate. It carries out the reaction GTP + succinate + CoA = succinyl-CoA + GDP + phosphate. It participates in carbohydrate metabolism; tricarboxylic acid cycle; succinate from succinyl-CoA (ligase route): step 1/1. In terms of biological role, succinyl-CoA synthetase functions in the citric acid cycle (TCA), coupling the hydrolysis of succinyl-CoA to the synthesis of either ATP or GTP and thus represents the only step of substrate-level phosphorylation in the TCA. The beta subunit provides nucleotide specificity of the enzyme and binds the substrate succinate, while the binding sites for coenzyme A and phosphate are found in the alpha subunit. In Xanthomonas campestris pv. campestris (strain 8004), this protein is Succinate--CoA ligase [ADP-forming] subunit beta.